Reading from the N-terminus, the 473-residue chain is MKSILDGLADTTFRTITTDLLYVGSNDIQYEDMKGDMASKLGYYPQKFPLSSFRGDPFQEKMTGGDDSLLSIIPSEQVNITEFYNKSLSTFKDNEENIQCGENFMDMECFMILNPSQQLAIAVLSLTLGTFTVLENLLVLCVILHSRSLRCRPSYHFIGSLAVADLLGSVIFVYSFVDFHVFHRKDSPNVFLFKLGGVTASFTASVGSLFLTAIDRYISIHRPLAYKRIVTRPKAVVAFCVMWTIAIVIAVLPLLGWNCKKLNSVCSDIFPLIDETYLMFWIGVTSILLLFIVYAYMYILWKAHSHAVRMLQRGTQKSIIIQSTEDGKVQITRPDQTRMDIRLAKTLVLILVVLIICWGPLLAIMVYDVFGKMNKLIKTIFAFCSMLCLLNSTVNPIIYALRSKDLRHAFRSMFPTCEGTAQPLDNSMESDCQHKHANNAGNVHRAAESCIKSTVKIAKVTMSVSTDTTAEAL.

Over 1–118 (MKSILDGLAD…CFMILNPSQQ (118 aa)) the chain is Extracellular. The tract at residues 2–23 (KSILDGLADTTFRTITTDLLYV) is required for mitochondrial localization. Residues Asn-79 and Asn-85 are each glycosylated (N-linked (GlcNAc...) asparagine). Residues 119–144 (LAIAVLSLTLGTFTVLENLLVLCVIL) traverse the membrane as a helical segment. At 145–156 (HSRSLRCRPSYH) the chain is on the cytoplasmic side. The chain crosses the membrane as a helical span at residues 157 to 177 (FIGSLAVADLLGSVIFVYSFV). Residues 178–189 (DFHVFHRKDSPN) are Extracellular-facing. A helical transmembrane segment spans residues 190–214 (VFLFKLGGVTASFTASVGSLFLTAI). Over 215–234 (DRYISIHRPLAYKRIVTRPK) the chain is Cytoplasmic. A helical transmembrane segment spans residues 235–257 (AVVAFCVMWTIAIVIAVLPLLGW). The Extracellular portion of the chain corresponds to 258–275 (NCKKLNSVCSDIFPLIDE). A helical transmembrane segment spans residues 276–301 (TYLMFWIGVTSILLLFIVYAYMYILW). The Cytoplasmic portion of the chain corresponds to 302–346 (KAHSHAVRMLQRGTQKSIIIQSTEDGKVQITRPDQTRMDIRLAKT). Residues 347–367 (LVLILVVLIICWGPLLAIMVY) traverse the membrane as a helical segment. At 368-379 (DVFGKMNKLIKT) the chain is on the extracellular side. The chain crosses the membrane as a helical span at residues 380 to 401 (IFAFCSMLCLLNSTVNPIIYAL). Residues 402-473 (RSKDLRHAFR…VSTDTTAEAL (72 aa)) are Cytoplasmic-facing. A lipid anchor (S-palmitoyl cysteine) is attached at Cys-417.

The protein belongs to the G-protein coupled receptor 1 family. Palmitoylation at Cys-417 is important for recruitment at both plasma membrane and lipid rafts and association with G protein alpha subunits.

Its subcellular location is the cell membrane. The protein localises to the mitochondrion outer membrane. The protein resides in the cell projection. It is found in the axon. It localises to the presynapse. In terms of biological role, G-protein coupled receptor for cannabinoids. Mediates many cannabinoid-induced effects in the central nervous system (CNS), as well as in peripheral tissues. Regulates cellular respiration and energy production in response to cannabinoids. Signaling typically involves reduction in cyclic AMP. This chain is Cannabinoid receptor 1 (CNR1), found in Taeniopygia guttata (Zebra finch).